A 367-amino-acid chain; its full sequence is 3-dehydroquinate synthase (367 aa).

NAD(+) is bound by residues 69-74 (DGEAFK), 103-107 (GVIGD), 127-128 (TT), K140, and K149. E182, H245, and H262 together coordinate Zn(2+).

This sequence belongs to the sugar phosphate cyclases superfamily. Dehydroquinate synthase family. Requires Co(2+) as cofactor. It depends on Zn(2+) as a cofactor. The cofactor is NAD(+).

It is found in the cytoplasm. The enzyme catalyses 7-phospho-2-dehydro-3-deoxy-D-arabino-heptonate = 3-dehydroquinate + phosphate. Its pathway is metabolic intermediate biosynthesis; chorismate biosynthesis; chorismate from D-erythrose 4-phosphate and phosphoenolpyruvate: step 2/7. Catalyzes the conversion of 3-deoxy-D-arabino-heptulosonate 7-phosphate (DAHP) to dehydroquinate (DHQ). This Ectopseudomonas mendocina (strain ymp) (Pseudomonas mendocina) protein is 3-dehydroquinate synthase.